Reading from the N-terminus, the 516-residue chain is Beta-glucosidase 1 (516 aa).

Residues 1-21 (MGHRLVVVLLLALLVAGAARA) form the signal peptide. Gln68 is an a beta-D-glucoside binding site. Asn96 carries an N-linked (GlcNAc...) asparagine glycan. Residues His169 and 214-215 (NE) each bind a beta-D-glucoside. Residue Glu215 is the Proton donor of the active site. The cysteines at positions 234 and 237 are disulfide-linked. Asn290 carries an N-linked (GlcNAc...) asparagine glycan. An a beta-D-glucoside-binding site is contributed by Tyr353. Asn364 carries N-linked (GlcNAc...) asparagine glycosylation. An a beta-D-glucoside-binding site is contributed by Glu424. Glu424 functions as the Nucleophile in the catalytic mechanism. A glycan (N-linked (GlcNAc...) asparagine) is linked at Asn432. A beta-D-glucoside-binding positions include Trp471, 478–479 (EW), and Phe487.

This sequence belongs to the glycosyl hydrolase 1 family.

It carries out the reaction Hydrolysis of terminal, non-reducing beta-D-glucosyl residues with release of beta-D-glucose.. This Oryza sativa subsp. japonica (Rice) protein is Beta-glucosidase 1 (BGLU1).